The sequence spans 568 residues: Methionine--tRNA ligase (568 aa).

Residues 10–20 (PYVQSVPHLGN) carry the 'HIGH' region motif. Residues cysteine 143, cysteine 146, cysteine 156, and cysteine 159 each contribute to the Zn(2+) site. Residues 333 to 337 (KFSKS) carry the 'KMSKS' region motif. Lysine 336 serves as a coordination point for ATP.

The protein belongs to the class-I aminoacyl-tRNA synthetase family. MetG type 1 subfamily. It depends on Zn(2+) as a cofactor.

The protein resides in the cytoplasm. It carries out the reaction tRNA(Met) + L-methionine + ATP = L-methionyl-tRNA(Met) + AMP + diphosphate. Its function is as follows. Is required not only for elongation of protein synthesis but also for the initiation of all mRNA translation through initiator tRNA(fMet) aminoacylation. The polypeptide is Methionine--tRNA ligase (Metallosphaera sedula (strain ATCC 51363 / DSM 5348 / JCM 9185 / NBRC 15509 / TH2)).